A 155-amino-acid polypeptide reads, in one-letter code: Ribosomal RNA large subunit methyltransferase H (155 aa).

S-adenosyl-L-methionine contacts are provided by residues Leu72, Gly103, and 122-127; that span reads LSPLTL.

It belongs to the RNA methyltransferase RlmH family. In terms of assembly, homodimer.

Its subcellular location is the cytoplasm. It catalyses the reaction pseudouridine(1915) in 23S rRNA + S-adenosyl-L-methionine = N(3)-methylpseudouridine(1915) in 23S rRNA + S-adenosyl-L-homocysteine + H(+). Functionally, specifically methylates the pseudouridine at position 1915 (m3Psi1915) in 23S rRNA. This is Ribosomal RNA large subunit methyltransferase H from Aeromonas hydrophila subsp. hydrophila (strain ATCC 7966 / DSM 30187 / BCRC 13018 / CCUG 14551 / JCM 1027 / KCTC 2358 / NCIMB 9240 / NCTC 8049).